The primary structure comprises 985 residues: SWI/SNF complex subunit SWI3D (985 aa).

The tract at residues 1 to 55 (MEEKRRDSAGTLAFAGSSGDSPASEPMPAPRRRGGGLKRKANALGGSNFFSSAPS) is disordered. Positions 30–41 (PRRRGGGLKRKA) are enriched in basic residues. Residues 108–133 (EKPKEEEERNKAIREWEALEAKIEAD) are a coiled coil. The SWIRM domain occupies 145-242 (HVVPNHCGWF…FHPFPPTDTG (98 aa)). The ZZ-type; degenerate zinc finger occupies 305 to 359 (AVEYHCNSCSADCSRKRYHCPKQADFDLCTECFNSGKFSSDMSSSDFILMEPAEA). Zn(2+) is bound by residues cysteine 310, cysteine 313, cysteine 333, and cysteine 336. Residues 362–413 (VGSGKWTDQETLLLLEALEIFKENWNEIAEHVATKTKAQCMLHFLQMPIEDA) form the SANT domain. 3 stretches are compositionally biased toward basic and acidic residues: residues 428–464 (TTDLAVSKDDNSVLKDAPEEAENKKRVDEDETMKEVP), 493–502 (AEQKTPKLET), and 615–661 (DNSH…EKQP). Disordered stretches follow at residues 428 to 502 (TTDL…KLET) and 591 to 814 (EDPP…EGKK). The segment covering 662-671 (GSRTENSTTK) has biased composition (polar residues). A compositionally biased stretch (basic and acidic residues) spans 703 to 724 (CSGKELQEPLKDGNKLSSENKD). A compositionally biased stretch (polar residues) spans 725–736 (ASQSTVSQSAAD). The span at 742-776 (ASRDVEMKDTLQSEKDPEDVVKTVGEKVQLAKEEG) shows a compositional bias: basic and acidic residues. A compositionally biased stretch (polar residues) spans 780-800 (VLSTPDKSVSQQPIGSASAPE). Residues 839–900 (ISAAAVKAKN…EQLERSRQRL (62 aa)) are a coiled coil. The disordered stretch occupies residues 944 to 985 (MAFPRPPMPRPPGFPVPGSFVAATTMTGSSDPSPGSDNVSSV). Pro residues predominate over residues 947 to 958 (PRPPMPRPPGFP). Positions 965 to 985 (AATTMTGSSDPSPGSDNVSSV) are enriched in polar residues.

As to quaternary structure, interacts with SWI3B, but not with BSH. Component of a RNA-directed DNA methylation (RdDM) complex that contains at least MORC6, MORC1/CRT1, MORC2, SWI3D and SUVH9. Interacts with MORC6 and SUVH9. As to expression, ubiquitously expressed.

The protein localises to the nucleus. Its function is as follows. Component of a multiprotein complex equivalent of the SWI/SNF complex, an ATP-dependent chromatin-remodeling complex, which is required for the positive and negative regulation of gene expression of a large number of genes. It changes chromatin structure by altering DNA-histone contacts within a nucleosome, leading eventually to a change in nucleosome position, thus facilitating or repressing binding of gene-specific transcription factors. The sequence is that of SWI/SNF complex subunit SWI3D (SWI3D) from Arabidopsis thaliana (Mouse-ear cress).